Here is a 198-residue protein sequence, read N- to C-terminus: Small ribosomal subunit protein uS4c (198 aa).

Residues threonine 17–lysine 40 form a disordered region. One can recognise an S4 RNA-binding domain in the interval methionine 88–arginine 154.

The protein belongs to the universal ribosomal protein uS4 family. Part of the 30S ribosomal subunit. Contacts protein S5. The interaction surface between S4 and S5 is involved in control of translational fidelity.

It is found in the plastid. It localises to the chloroplast. Functionally, one of the primary rRNA binding proteins, it binds directly to 16S rRNA where it nucleates assembly of the body of the 30S subunit. Its function is as follows. With S5 and S12 plays an important role in translational accuracy. The protein is Small ribosomal subunit protein uS4c (rps4) of Pinus thunbergii (Japanese black pine).